The chain runs to 267 residues: tRNA pseudouridine synthase A (267 aa).

Asp-54 acts as the Nucleophile in catalysis. Tyr-112 contributes to the substrate binding site.

The protein belongs to the tRNA pseudouridine synthase TruA family. Homodimer.

It carries out the reaction uridine(38/39/40) in tRNA = pseudouridine(38/39/40) in tRNA. Formation of pseudouridine at positions 38, 39 and 40 in the anticodon stem and loop of transfer RNAs. The sequence is that of tRNA pseudouridine synthase A from Bordetella avium (strain 197N).